The chain runs to 329 residues: Phosphoenolpyruvate transferase (329 aa).

D61 serves as a coordination point for 7,8-didemethyl-8-hydroxy-5-deazariboflavin.

This sequence belongs to the CofD family. In terms of assembly, homodimer. Mg(2+) is required as a cofactor.

The catalysed reaction is enolpyruvoyl-2-diphospho-5'-guanosine + 7,8-didemethyl-8-hydroxy-5-deazariboflavin = dehydro coenzyme F420-0 + GMP + H(+). It participates in cofactor biosynthesis; coenzyme F420 biosynthesis. Catalyzes the transfer of the phosphoenolpyruvate moiety from enoylpyruvoyl-2-diphospho-5'-guanosine (EPPG) to 7,8-didemethyl-8-hydroxy-5-deazariboflavin (FO) with the formation of dehydro coenzyme F420-0 and GMP. The sequence is that of Phosphoenolpyruvate transferase from Mycobacterium marinum (strain ATCC BAA-535 / M).